Reading from the N-terminus, the 323-residue chain is Fatty acid desaturase 4, chloroplastic (323 aa).

A chloroplast-targeting transit peptide spans 1 to 77 (MAVSLPTKYP…PRPNREKLVV (77 aa)). 2 helical membrane passes run 101 to 121 (WVAAGCTTLFVSLAKSVIGGF) and 131 to 151 (LAGYAGYILADLGSGVYHWAI). The Histidine box-1 motif lies at 170–173 (QGHH). Residues 204–224 (LAFNDPVFHGFVCTFAFCILF) form a helical membrane-spanning segment. A Histidine box-2 motif is present at residues 229–233 (HAWAH). A Histidine box-3 motif is present at residues 258-262 (HAEHH).

It belongs to the fatty acid desaturase CarF family. The cofactor is Fe(2+).

It localises to the plastid. Its subcellular location is the chloroplast membrane. The catalysed reaction is a 1-acyl-2-hexadecanoyl-glycerolipid + 2 reduced [2Fe-2S]-[ferredoxin] + O2 + 2 H(+) = a 1-acyl-2-[(3E)-hexadec-3-enoyl]-glycerolipid + 2 oxidized [2Fe-2S]-[ferredoxin] + 2 H2O. It functions in the pathway lipid metabolism; fatty acid metabolism. Functionally, fatty acid desaturase involved in the production of chloroplast-specific phosphatidylglycerol molecular species containing 16:1(3E). Catalyzes the formation of a trans double bond introduced close to the carboxyl group of palmitic acid, which is specifically esterified to the sn-2 glyceryl carbon of phosphatidylglycerol. The protein is Fatty acid desaturase 4, chloroplastic of Arabidopsis thaliana (Mouse-ear cress).